Here is a 943-residue protein sequence, read N- to C-terminus: UvrABC system protein A (943 aa).

Residue 31–38 (GLSGSGKS) participates in ATP binding. The segment at 253–280 (CPHCGYSVPELEPRLFSFNNPAGACPTC) adopts a C4-type zinc-finger fold. ABC transporter domains lie at 310–587 (WDRR…PHSI) and 607–937 (LDKK…RFLK). 640 to 647 (GVSGSGKS) is a binding site for ATP. Residues 740–766 (CEACQGDGVIKVEMHFLPDVYVPCEQC) form a C4-type zinc finger.

This sequence belongs to the ABC transporter superfamily. UvrA family. In terms of assembly, forms a heterotetramer with UvrB during the search for lesions.

The protein localises to the cytoplasm. In terms of biological role, the UvrABC repair system catalyzes the recognition and processing of DNA lesions. UvrA is an ATPase and a DNA-binding protein. A damage recognition complex composed of 2 UvrA and 2 UvrB subunits scans DNA for abnormalities. When the presence of a lesion has been verified by UvrB, the UvrA molecules dissociate. The chain is UvrABC system protein A from Pasteurella multocida (strain Pm70).